The primary structure comprises 311 residues: Ornithine carbamoyltransferase (311 aa).

Carbamoyl phosphate is bound by residues 57–60 (STRT), Q84, R108, and 135–138 (HPCQ). L-ornithine-binding positions include N166, D230, and 234–235 (SM). Carbamoyl phosphate-binding positions include 270 to 271 (CL) and R298.

The protein belongs to the aspartate/ornithine carbamoyltransferase superfamily. OTCase family.

The protein localises to the cytoplasm. The enzyme catalyses carbamoyl phosphate + L-ornithine = L-citrulline + phosphate + H(+). Its pathway is amino-acid biosynthesis; L-arginine biosynthesis; L-arginine from L-ornithine and carbamoyl phosphate: step 1/3. Its function is as follows. Reversibly catalyzes the transfer of the carbamoyl group from carbamoyl phosphate (CP) to the N(epsilon) atom of ornithine (ORN) to produce L-citrulline. The sequence is that of Ornithine carbamoyltransferase from Carboxydothermus hydrogenoformans (strain ATCC BAA-161 / DSM 6008 / Z-2901).